We begin with the raw amino-acid sequence, 248 residues long: ATP synthase subunit a, chloroplastic (248 aa).

Transmembrane regions (helical) follow at residues 38 to 58 (QVLITSWVVIAILLGSAAIAV), 96 to 116 (VPFIGTLFLFIFVSNWSGALL), 135 to 155 (INTTVALALPTSVAYFYAGLT), 200 to 220 (LVVVVLVSLVPLVIPIPVMFL), and 221 to 241 (GLFTSGIQALIFATLAAAYIG).

Belongs to the ATPase A chain family. F-type ATPases have 2 components, CF(1) - the catalytic core - and CF(0) - the membrane proton channel. CF(1) has five subunits: alpha(3), beta(3), gamma(1), delta(1), epsilon(1). CF(0) has four main subunits: a, b, b' and c.

It localises to the plastid. Its subcellular location is the chloroplast thylakoid membrane. Key component of the proton channel; it plays a direct role in the translocation of protons across the membrane. The protein is ATP synthase subunit a, chloroplastic of Nymphaea alba (White water-lily).